Reading from the N-terminus, the 59-residue chain is Large ribosomal subunit protein bL32 (59 aa).

Residues methionine 1–arginine 16 are compositionally biased toward basic residues. The tract at residues methionine 1–glutamate 59 is disordered. A compositionally biased stretch (basic and acidic residues) spans valine 28–leucine 44.

This sequence belongs to the bacterial ribosomal protein bL32 family.

This Brucella abortus (strain S19) protein is Large ribosomal subunit protein bL32.